The chain runs to 109 residues: uncharacterized protein (109 aa).

The helical transmembrane segment at V26–L48 threads the bilayer.

The protein localises to the membrane. This is an uncharacterized protein from Saccharomyces cerevisiae (strain ATCC 204508 / S288c) (Baker's yeast).